We begin with the raw amino-acid sequence, 37 residues long: Large ribosomal subunit protein bL36c (37 aa).

This sequence belongs to the bacterial ribosomal protein bL36 family.

It localises to the plastid. Its subcellular location is the chloroplast. This Stigeoclonium helveticum (Green alga) protein is Large ribosomal subunit protein bL36c.